Reading from the N-terminus, the 509-residue chain is MNDDIIILLSVFCGIFFICFIICSSIALYLWKSKSRKRLVEQYTKEAKQAKKQILANGYKEISEAKMLFLKRSELEKNELDRVKEQLELRSNDLKRNQEIVESKSQRLDASLLDLEKRKFLLDKKEEYLIKVLEDASSLTKSQAKELLIKQVKNKSEKELISILKNAELQAHSNSKMIANNIIISAMERIKVELTSQRTTNIVKLPSDDLKGRIIGKDGRNMKAFKQIGGVDIVIDETPNTVVVSSFNPIRREIATRTLEQLIIDGRIQPVKIENELKKQEQELEYIIQETGLSTIKELNINDIDIELVKLIGKLKFRTSYGQNVLAHSIEVAKLSGAIASELGLDVEKAIRAGLLHDIGKAIDFEKQGSHVVLGAEIAKKYNEDPIVINCIESHHEDKEKESEIAAIVAIADSISASRPGARYNAIDEFILRMTEIEKIGNSIPGVAKTYALQSGRQIRLIVDPLVASDLDLAMILEKMKEEIKNKVIIPGEITITVIRERKETDVLK.

A helical membrane pass occupies residues 5-25; that stretch reads IIILLSVFCGIFFICFIICSS. Positions 199–259 constitute a KH domain; it reads TTNIVKLPSD…IRREIATRTL (61 aa). Positions 325-418 constitute an HD domain; it reads VLAHSIEVAK…VAIADSISAS (94 aa).

Belongs to the RNase Y family.

It is found in the cell membrane. Its function is as follows. Endoribonuclease that initiates mRNA decay. This is Ribonuclease Y from Mycoplasma capricolum subsp. capricolum (strain California kid / ATCC 27343 / NCTC 10154).